Reading from the N-terminus, the 36-residue chain is MTASYLPSILVPLVGILLPAVTMASLFLYIERDEIL.

Residues 7 to 29 (PSILVPLVGILLPAVTMASLFLY) traverse the membrane as a helical segment.

Belongs to the PsaI family.

The protein localises to the plastid. Its subcellular location is the chloroplast thylakoid membrane. May help in the organization of the PsaL subunit. The protein is Photosystem I reaction center subunit VIII of Adiantum capillus-veneris (Maidenhair fern).